We begin with the raw amino-acid sequence, 286 residues long: CDP-diacylglycerol--serine O-phosphatidyltransferase (286 aa).

Transmembrane regions (helical) follow at residues 15 to 35 (ILPSAMTVLSICAGLTAIKFA), 74 to 94 (IDSLADAVNFGVTPALVLYVS), 95 to 115 (MLSKWPVGWVVVLLYAVCVVL), 135 to 155 (EFFVGMPAPAGAVSMIGLLAL), 167 to 187 (GWFLSFWVTGTSILLVSGIPM), and 207 to 227 (LAICAAAAVLAPYLLIWVIII).

Belongs to the CDP-alcohol phosphatidyltransferase class-I family.

Its subcellular location is the cell membrane. It catalyses the reaction a CDP-1,2-diacyl-sn-glycerol + L-serine = a 1,2-diacyl-sn-glycero-3-phospho-L-serine + CMP + H(+). The polypeptide is CDP-diacylglycerol--serine O-phosphatidyltransferase (pssA) (Mycobacterium tuberculosis (strain ATCC 25618 / H37Rv)).